The following is a 389-amino-acid chain: Glutamate 5-kinase (389 aa).

Lysine 16 serves as a coordination point for ATP. Residues serine 56, aspartate 143, and asparagine 155 each contribute to the substrate site. An ATP-binding site is contributed by 175 to 176; it reads SD. A PUA domain is found at 281 to 358; the sequence is AGELHVDEGA…AEIEAILGYA (78 aa).

The protein belongs to the glutamate 5-kinase family.

Its subcellular location is the cytoplasm. It carries out the reaction L-glutamate + ATP = L-glutamyl 5-phosphate + ADP. It functions in the pathway amino-acid biosynthesis; L-proline biosynthesis; L-glutamate 5-semialdehyde from L-glutamate: step 1/2. In terms of biological role, catalyzes the transfer of a phosphate group to glutamate to form L-glutamate 5-phosphate. The sequence is that of Glutamate 5-kinase from Rhizobium rhizogenes (strain K84 / ATCC BAA-868) (Agrobacterium radiobacter).